A 222-amino-acid chain; its full sequence is Large ribosomal subunit protein uL1 (222 aa).

Belongs to the universal ribosomal protein uL1 family. In terms of assembly, part of the 50S ribosomal subunit.

Functionally, binds directly to 23S rRNA. Probably involved in E site tRNA release. Its function is as follows. Protein L1 is also a translational repressor protein, it controls the translation of its operon by binding to its mRNA. The chain is Large ribosomal subunit protein uL1 from Pyrobaculum calidifontis (strain DSM 21063 / JCM 11548 / VA1).